A 269-amino-acid polypeptide reads, in one-letter code: UPF0524 protein C3orf70 homolog A (269 aa).

Disordered regions lie at residues valine 139 to isoleucine 203 and aspartate 215 to cysteine 249. Over residues arginine 141–threonine 150 the composition is skewed to pro residues. The span at histidine 151–arginine 164 shows a compositional bias: low complexity. Positions glutamine 179–histidine 191 are enriched in basic and acidic residues. The segment covering aspartate 215 to serine 233 has biased composition (acidic residues).

The protein belongs to the UPF0524 family.

Functionally, plays a role in neuronal and neurobehavioral development. Required for normal expression of neuronal markers elavl3 and eno2 and neurobehaviors related to circadian rhythm and changes in light-dark conditions. The protein is UPF0524 protein C3orf70 homolog A of Danio rerio (Zebrafish).